Here is a 363-residue protein sequence, read N- to C-terminus: 3-isopropylmalate dehydrogenase (363 aa).

Residue 79-92 (GPKWEHLPPNDQPE) participates in NAD(+) binding. Residues arginine 100, arginine 110, arginine 139, and aspartate 228 each coordinate substrate. Mg(2+)-binding residues include aspartate 228, aspartate 252, and aspartate 256. 286 to 298 (GSAPDIAGKNIAN) serves as a coordination point for NAD(+).

The protein belongs to the isocitrate and isopropylmalate dehydrogenases family. LeuB type 1 subfamily. As to quaternary structure, homodimer. Mg(2+) serves as cofactor. Mn(2+) is required as a cofactor.

Its subcellular location is the cytoplasm. The enzyme catalyses (2R,3S)-3-isopropylmalate + NAD(+) = 4-methyl-2-oxopentanoate + CO2 + NADH. The protein operates within amino-acid biosynthesis; L-leucine biosynthesis; L-leucine from 3-methyl-2-oxobutanoate: step 3/4. In terms of biological role, catalyzes the oxidation of 3-carboxy-2-hydroxy-4-methylpentanoate (3-isopropylmalate) to 3-carboxy-4-methyl-2-oxopentanoate. The product decarboxylates to 4-methyl-2 oxopentanoate. The protein is 3-isopropylmalate dehydrogenase of Vibrio vulnificus (strain YJ016).